Here is a 269-residue protein sequence, read N- to C-terminus: Calretinin (269 aa).

6 consecutive EF-hand domains span residues 14–49, 61–96, 105–140, 149–184, 193–228, and 230–265; these read LSASQFLDVWRHFDADGNGYIEGKELENFFQELESA, SLGDKMKEFMHKYDKNADGKIEMAELAQILPTEENF, GSSSEFMEAWRRYDTDRSGYIEANELKGFLSDLLKK, KLQEYTQTILRMFDMNGDGKLGLSEMSRLLPVQENF, LSSEEFNAIFAFYDKDGSGFIDEHELDALLKDLYEK, and KKEMSIQQLTNYRRSIMNLSDGGKLYRKELEVVLCS. Residues aspartate 27, aspartate 29, asparagine 31, tyrosine 33, glutamate 38, aspartate 74, asparagine 76, aspartate 78, lysine 80, glutamate 85, aspartate 118, aspartate 120, serine 122, tyrosine 124, glutamate 129, aspartate 162, asparagine 164, aspartate 166, lysine 168, glutamate 173, aspartate 206, aspartate 208, serine 210, and glutamate 217 each contribute to the Ca(2+) site.

This sequence belongs to the calbindin family.

It is found in the synapse. It localises to the cell projection. The protein localises to the dendrite. Functionally, calcium-binding protein involved in calcium homeostasis and signal transduction. It plays a critical role in buffering intracellular calcium levels and modulating calcium-dependent signaling pathways. Predominantly expressed in specific neuronal populations, influences synaptic plasticity and neuronal excitability, contributing to learning and memory. During embryonic development, it facilitates neuronal differentiation and maturation. This Gallus gallus (Chicken) protein is Calretinin (CALB2).